A 267-amino-acid polypeptide reads, in one-letter code: Trehalose 2-sulfotransferase (267 aa).

Residues Q14, 33–39 (EPQEFFQ), P48, and W53 each bind alpha,alpha-trehalose. E36 acts as the Proton acceptor in catalysis.

The protein belongs to the Stf0 sulfotransferase family. Homodimer.

It catalyses the reaction alpha,alpha-trehalose + 3'-phosphoadenylyl sulfate = 2-O-sulfo-alpha,alpha-trehalose + adenosine 3',5'-bisphosphate + H(+). Its pathway is glycolipid metabolism. Its function is as follows. Catalyzes the sulfuryl group transfer from 3'-phosphoadenosine-5'-phosphosulfate (PAPS) to trehalose, leading to trehalose-2-sulfate (T2S). The sulfation of trehalose is the first step in the biosynthesis of sulfolipid-1 (SL-1), a major cell wall glycolipid and the most abundant sulfated metabolite found in Mycobacterium tuberculosis, that is a potential virulence factor thought to mediate host-pathogen interactions. This chain is Trehalose 2-sulfotransferase, found in Mycobacterium tuberculosis (strain ATCC 35801 / TMC 107 / Erdman).